We begin with the raw amino-acid sequence, 130 residues long: Larval cuticle protein 1 (130 aa).

An N-terminal signal peptide occupies residues 1–16 (MFKFVMICAVLGLAVA). One can recognise a Chitin-binding type R&amp;R domain in the interval 43–104 (ADGFDSSLHT…PSGAWIPTPP (62 aa)).

Component of the larval cuticle. The polypeptide is Larval cuticle protein 1 (Lcp1) (Drosophila melanogaster (Fruit fly)).